Reading from the N-terminus, the 297-residue chain is HTH-type transcriptional regulator ArgP (297 aa).

The region spanning 4 to 60 (PDYRTLQALDAVIRERGFERAAQKLCITQSAVSQRIKQLENLFGQPLLVRTVPPRPT) is the HTH lysR-type domain. Positions 21 to 40 (FERAAQKLCITQSAVSQRIK) form a DNA-binding region, H-T-H motif.

Belongs to the LysR transcriptional regulatory family. Homodimer.

Controls the transcription of genes involved in arginine and lysine metabolism. In Serratia proteamaculans (strain 568), this protein is HTH-type transcriptional regulator ArgP.